Here is a 494-residue protein sequence, read N- to C-terminus: MGIKGLIPFLSEKVPSSISELSLESLSGESLAIDASAALYQFTIAIRDSSYFSSLVNSKGESTSHIYGLMNRCSKFLEYGIKPVFVFDSKPPELKTKTLEKRRQQREEANASLKKAISEGDKESVKKLVGRTVKVSKEMNESAKKLLRLMGVPVIEALEEAEAQCAYLVTKNLCRFVASEDTDTLVFGGAFLLRNVASSSSKKILKVDLQKVLDGLEFNFDQFIDFCILCGCDYCDTLEGVGPKTAYSLVKKYQNLEEIVNFKGGDYDDFKEAKEYFLSPKVNEYDENSVKLGTIDPEGLTEFLVQENNFSKERVEKFIEKLLKFKTKKIQTSLLSFLTAPQHNNKAKSSNKRPREPKALDCKPNTYGSGKGTNVVKKESSTIKKDEIDLTAEDLFCEPSNSDNEEDDRGRVDKNEDLFKKSENETNEIKQNQFKSKSDEKKKQEEHHTIEFNFNHRKVILIDDDDDEVVTTANSEKMNCGKCLIYYFLQKLIK.

Positions 1–106 (MGIKGLIPFL…KTLEKRRQQR (106 aa)) are N-domain. D34 is a binding site for Mg(2+). DNA contacts are provided by R47 and R72. Mg(2+) is bound by residues D88, E160, E162, D181, and D183. The I-domain stretch occupies residues 124 to 253 (SVKKLVGRTV…KTAYSLVKKY (130 aa)). E160 lines the DNA pocket. Positions 231 and 233 each coordinate DNA. D233 contacts Mg(2+). The interval 330–338 (IQTSLLSFL) is interaction with PCNA. 2 disordered regions span residues 341-382 (PQHN…ESST) and 395-426 (LFCE…ENET). Over residues 408-426 (DRGRVDKNEDLFKKSENET) the composition is skewed to basic and acidic residues.

It belongs to the XPG/RAD2 endonuclease family. FEN1 subfamily. In terms of assembly, interacts with PCNA. Three molecules of FEN1 bind to one PCNA trimer with each molecule binding to one PCNA monomer. PCNA stimulates the nuclease activity without altering cleavage specificity. It depends on Mg(2+) as a cofactor. In terms of processing, phosphorylated. Phosphorylation upon DNA damage induces relocalization to the nuclear plasma.

The protein resides in the nucleus. The protein localises to the nucleolus. It localises to the nucleoplasm. Its subcellular location is the mitochondrion. Its function is as follows. Structure-specific nuclease with 5'-flap endonuclease and 5'-3' exonuclease activities involved in DNA replication and repair. During DNA replication, cleaves the 5'-overhanging flap structure that is generated by displacement synthesis when DNA polymerase encounters the 5'-end of a downstream Okazaki fragment. It enters the flap from the 5'-end and then tracks to cleave the flap base, leaving a nick for ligation. Also involved in the long patch base excision repair (LP-BER) pathway, by cleaving within the apurinic/apyrimidinic (AP) site-terminated flap. Acts as a genome stabilization factor that prevents flaps from equilibrating into structures that lead to duplications and deletions. Also possesses 5'-3' exonuclease activity on nicked or gapped double-stranded DNA, and exhibits RNase H activity. Also involved in replication and repair of rDNA and in repairing mitochondrial DNA. The chain is Flap endonuclease 1 from Theileria parva (East coast fever infection agent).